The following is a 979-amino-acid chain: Collagen alpha-2(I) chain (979 aa).

The segment at 1–979 is disordered; that stretch reads SGGFDFSFLP…FGYEGDFYRA (979 aa). A 4-hydroxyproline mark is found at Pro10, Pro13, Pro38, and Pro44. The span at 24 to 70 shows a compositional bias: low complexity; the sequence is LGPGPMGLMGPRGPPGASGAPGPQGFQGPAGEPGEPGQTGPAGARGP. Lys99 is modified (5-hydroxylysine; alternate). The O-linked (Gal...) hydroxylysine; alternate glycan is linked to Lys99. Low complexity-rich tracts occupy residues 147 to 176, 222 to 263, 272 to 282, and 312 to 331; these read VGAP…SAGP, PGAN…AGSK, SAGPQGPPGSS, and RAGV…AGVR. Residues Pro334 and Pro337 each carry the 4-hydroxyproline modification. The segment covering 363–382 has biased composition (low complexity); the sequence is LPGIDGRPGPIGPAGARGEA. The span at 427–436 shows a compositional bias: gly residues; that stretch reads GVQGGKGEQG. Residues 483–500 are compositionally biased toward low complexity; sequence PGESGAVGPSGAIGSRGP. Gly residues predominate over residues 517 to 527; the sequence is GAPGGSGGLPG. Low complexity-rich tracts occupy residues 550-594 and 601-621; these read VGTT…PRGS and VGPA…QPGA. A compositionally biased stretch (basic and acidic residues) spans 622–631; the sequence is KGERGTKGPK. The span at 639–649 shows a compositional bias: low complexity; sequence PTGPVGSAGPA. The segment covering 659–668 has biased composition (gly residues); sequence GSRGDGGPPG. Positions 669-679 are enriched in low complexity; that stretch reads ATGFPGAAGRT. Over residues 710 to 724 the composition is skewed to gly residues; that stretch reads GPVGRGETGAGGPPG. 2 stretches are compositionally biased toward low complexity: residues 725 to 759 and 767 to 777; these read FTGE…LGLP and LPGVAGAVGEP. Residues 778 to 788 are compositionally biased toward gly residues; the sequence is GPLGIGPPGAR. Low complexity predominate over residues 840–855; it reads EPGPVGSVGPVGALGP. Residues 865–876 are compositionally biased toward basic and acidic residues; the sequence is RGDKGEPGDKGP. Residues 949–961 are compositionally biased toward pro residues; sequence SGPPGPPGPPGPP.

This sequence belongs to the fibrillar collagen family. As to quaternary structure, trimers of one alpha 2(I) and two alpha 1(I) chains. Interacts (via C-terminus) with TMEM131 (via PapD-L domain); the interaction is direct and is involved in assembly and TRAPPIII ER-to-Golgi transport complex-dependent secretion of collagen. Post-translationally, prolines at the third position of the tripeptide repeating unit (G-X-Y) are hydroxylated in some or all of the chains. In terms of tissue distribution, expressed in bones.

It is found in the secreted. The protein localises to the extracellular space. The protein resides in the extracellular matrix. Functionally, type I collagen is a member of group I collagen (fibrillar forming collagen). This chain is Collagen alpha-2(I) chain, found in Bradypus variegatus (Brown-throated three-fingered sloth).